Reading from the N-terminus, the 170-residue chain is Der GTPase-activating protein YihI (170 aa).

Disordered regions lie at residues 1-96 (MKKP…LSPQ) and 145-170 (LSYD…RGGN). The span at 20-30 (TREELNQEARD) shows a compositional bias: basic and acidic residues. Residues 31-40 (RKRLKKHRGH) show a composition bias toward basic residues. Acidic residues predominate over residues 147–159 (YDDEEDEEEDEKQ).

This sequence belongs to the YihI family. Interacts with Der.

Its function is as follows. A GTPase-activating protein (GAP) that modifies Der/EngA GTPase function. May play a role in ribosome biogenesis. The polypeptide is Der GTPase-activating protein YihI (Salmonella arizonae (strain ATCC BAA-731 / CDC346-86 / RSK2980)).